Here is a 195-residue protein sequence, read N- to C-terminus: Large ribosomal subunit protein uL5 (195 aa).

It belongs to the universal ribosomal protein uL5 family. In terms of assembly, part of the 50S ribosomal subunit; part of the 5S rRNA/L5/L18/L25 subcomplex. Contacts the 5S rRNA and the P site tRNA. Forms a bridge to the 30S subunit in the 70S ribosome.

In terms of biological role, this is one of the proteins that bind and probably mediate the attachment of the 5S RNA into the large ribosomal subunit, where it forms part of the central protuberance. In the 70S ribosome it contacts protein S13 of the 30S subunit (bridge B1b), connecting the 2 subunits; this bridge is implicated in subunit movement. Contacts the P site tRNA; the 5S rRNA and some of its associated proteins might help stabilize positioning of ribosome-bound tRNAs. The protein is Large ribosomal subunit protein uL5 of Chlorobium phaeobacteroides (strain DSM 266 / SMG 266 / 2430).